The sequence spans 88 residues: Small ribosomal subunit protein uS17 (88 aa).

Belongs to the universal ribosomal protein uS17 family. In terms of assembly, part of the 30S ribosomal subunit.

Functionally, one of the primary rRNA binding proteins, it binds specifically to the 5'-end of 16S ribosomal RNA. The chain is Small ribosomal subunit protein uS17 from Saccharophagus degradans (strain 2-40 / ATCC 43961 / DSM 17024).